Consider the following 285-residue polypeptide: Shikimate dehydrogenase (NADP(+)) (285 aa).

Shikimate contacts are provided by residues 22–24 (SMS) and Thr69. Residue Lys73 is the Proton acceptor of the active site. An NADP(+)-binding site is contributed by Asp85. The shikimate site is built by Asn94 and Asp110. Residues 136-140 (GAGGA), 160-165 (NRTVAR), and Met225 each bind NADP(+). Residue Tyr227 participates in shikimate binding. Gly248 contributes to the NADP(+) binding site.

The protein belongs to the shikimate dehydrogenase family. Homodimer.

It carries out the reaction shikimate + NADP(+) = 3-dehydroshikimate + NADPH + H(+). The protein operates within metabolic intermediate biosynthesis; chorismate biosynthesis; chorismate from D-erythrose 4-phosphate and phosphoenolpyruvate: step 4/7. Functionally, involved in the biosynthesis of the chorismate, which leads to the biosynthesis of aromatic amino acids. Catalyzes the reversible NADPH linked reduction of 3-dehydroshikimate (DHSA) to yield shikimate (SA). The polypeptide is Shikimate dehydrogenase (NADP(+)) (Caulobacter vibrioides (strain ATCC 19089 / CIP 103742 / CB 15) (Caulobacter crescentus)).